The chain runs to 230 residues: Small ribosomal subunit protein uS3 (230 aa).

Positions 43–95 (VNRVIIYSARPKMISEERKAHLAKLLELKFGLEKPVIEVLPIENPNLDAHVIA) constitute a KH type-2 domain.

It belongs to the universal ribosomal protein uS3 family. As to quaternary structure, part of the 30S ribosomal subunit.

Functionally, binds the lower part of the 30S subunit head. The polypeptide is Small ribosomal subunit protein uS3 (Nanoarchaeum equitans (strain Kin4-M)).